We begin with the raw amino-acid sequence, 501 residues long: Acyl-CoA-binding domain-containing protein 5A (501 aa).

The ACB domain maps to 9 to 98 (YEQRFNAAVK…LKLILESMPV (90 aa)). Residues 20 to 29 (IQNLPPNGSF), 40 to 44 (YSYYK), K66, and Y85 contribute to the an acyl-CoA site. The segment at 173–405 (IDLEDREDDD…GERWGADGPM (233 aa)) is disordered. The span at 176 to 195 (EDREDDDDEDEEGERDEVEE) shows a compositional bias: acidic residues. Residues 219-235 (SNGSISQHKGLSNGTHG) are compositionally biased toward polar residues. 3 stretches are compositionally biased toward basic and acidic residues: residues 236 to 254 (SKSD…HMNH), 266 to 283 (NSEK…HVAS), and 328 to 366 (RSQD…KRSD). Over residues 376 to 389 (SRSPASGSGSAGPQ) the composition is skewed to low complexity. Residues 406–437 (TENLNEQIICALARLQDDMQSVLQRLHTLEAL) adopt a coiled-coil conformation. Residues 465-485 (WWPFDVSLGTVAFAVVWPFVV) form a helical membrane-spanning segment.

The protein belongs to the ATG37 family.

It is found in the membrane. Acyl-CoA binding protein which acts as the peroxisome receptor for pexophagy but is dispensable for aggrephagy and nonselective autophagy. Binds medium- and long-chain acyl-CoA esters. This is Acyl-CoA-binding domain-containing protein 5A (acbd5a) from Danio rerio (Zebrafish).